The primary structure comprises 600 residues: Fructan 1-exohydrolase (600 aa).

The N-terminal stretch at 1–27 (MAQAWAFLLPVLFFGSYVTNLFLPTYA) is a signal peptide. Aspartate 73 is an active-site residue. Residues asparagine 166, asparagine 234, and asparagine 246 are each glycosylated (N-linked (GlcNAc...) asparagine). Residues cysteine 444 and cysteine 490 are joined by a disulfide bond. N-linked (GlcNAc...) asparagine glycosylation is present at asparagine 565.

Belongs to the glycosyl hydrolase 32 family.

It carries out the reaction Hydrolysis of terminal, non-reducing (2-&gt;1)-linked beta-D-fructofuranose residues in fructans.. With respect to regulation, inhibited by sucrose. Hydrolyzes inulin-type beta-(2,1)-fructans. May play a role as a beta-(2,1)-trimmer during graminan biosynthesis. This Leymus chinensis (Chinese lyme grass) protein is Fructan 1-exohydrolase.